Reading from the N-terminus, the 614-residue chain is Probable LRR receptor-like serine/threonine-protein kinase At5g45780 (614 aa).

The N-terminal stretch at M1–A26 is a signal peptide. Over M27 to S242 the chain is Extracellular. LRR repeat units follow at residues H104–L126, E128–T151, H152–L174, and G176–K197. 3 N-linked (GlcNAc...) asparagine glycosylation sites follow: N186, N193, and N224. Residues F243–L263 traverse the membrane as a helical segment. Topologically, residues W264–R614 are cytoplasmic. T297 is subject to Phosphothreonine. One can recognise a Protein kinase domain in the interval F300–V576. L306–V314 provides a ligand contact to ATP. At T323 the chain carries Phosphothreonine. An ATP-binding site is contributed by K328. S380 bears the Phosphoserine mark. Catalysis depends on D426, which acts as the Proton acceptor. A phosphothreonine mark is found at T459, T460, and T465. Y473 is subject to Phosphotyrosine. A Phosphoserine modification is found at S475. At T476 the chain carries Phosphothreonine. Residue S480 is modified to Phosphoserine. The residue at position 555 (T555) is a Phosphothreonine.

This sequence belongs to the protein kinase superfamily. Ser/Thr protein kinase family.

It is found in the membrane. The enzyme catalyses L-seryl-[protein] + ATP = O-phospho-L-seryl-[protein] + ADP + H(+). It carries out the reaction L-threonyl-[protein] + ATP = O-phospho-L-threonyl-[protein] + ADP + H(+). This Arabidopsis thaliana (Mouse-ear cress) protein is Probable LRR receptor-like serine/threonine-protein kinase At5g45780.